Consider the following 242-residue polypeptide: Probable septum site-determining protein MinC (242 aa).

It belongs to the MinC family. In terms of assembly, interacts with MinD and FtsZ.

Its function is as follows. Cell division inhibitor that blocks the formation of polar Z ring septums. Rapidly oscillates between the poles of the cell to destabilize FtsZ filaments that have formed before they mature into polar Z rings. Prevents FtsZ polymerization. This Thioalkalivibrio sulfidiphilus (strain HL-EbGR7) protein is Probable septum site-determining protein MinC.